Here is a 649-residue protein sequence, read N- to C-terminus: tRNA-guanine(15) transglycosylase (649 aa).

D88 functions as the Nucleophile in the catalytic mechanism. Substrate-binding residues include D123 and A194. Zn(2+)-binding residues include C280, C282, and C285. One can recognise a PUA domain in the interval 573-648 (KYRIVIDSSV…VAVTLRGGLK (76 aa)).

Belongs to the archaeosine tRNA-ribosyltransferase family. It depends on Zn(2+) as a cofactor.

The enzyme catalyses guanosine(15) in tRNA + 7-cyano-7-deazaguanine = 7-cyano-7-carbaguanosine(15) in tRNA + guanine. It functions in the pathway tRNA modification; archaeosine-tRNA biosynthesis. In terms of biological role, exchanges the guanine residue with 7-cyano-7-deazaguanine (preQ0) at position 15 in the dihydrouridine loop (D-loop) of archaeal tRNAs. The polypeptide is tRNA-guanine(15) transglycosylase (Methanococcus maripaludis (strain C7 / ATCC BAA-1331)).